Here is a 547-residue protein sequence, read N- to C-terminus: Apolipoprotein N-acyltransferase (547 aa).

5 helical membrane-spanning segments follow: residues 31–51 (ILSGILVGTSYIPFPPWALIF), 71–91 (FWAGWVTQFILTLIGFHWIAY), 106–126 (LALLLFCAFMHLYIPVAVAAG), 180–200 (LVGFHGLSAVVLLFNAWMGYV), and 210–230 (ALSHLSLLALTFAALVGWGFW). In terms of domain architecture, CN hydrolase spans 247–515 (VQANIGNLEK…KYLKNAPLTF (269 aa)). The active-site Proton acceptor is the Glu294. Lys364 is an active-site residue. Cys418 serves as the catalytic Nucleophile. A helical transmembrane segment spans residues 515-535 (FFVQWGHWDWIVILLVLGAVI).

This sequence belongs to the CN hydrolase family. Apolipoprotein N-acyltransferase subfamily.

Its subcellular location is the cell inner membrane. The enzyme catalyses N-terminal S-1,2-diacyl-sn-glyceryl-L-cysteinyl-[lipoprotein] + a glycerophospholipid = N-acyl-S-1,2-diacyl-sn-glyceryl-L-cysteinyl-[lipoprotein] + a 2-acyl-sn-glycero-3-phospholipid + H(+). It participates in protein modification; lipoprotein biosynthesis (N-acyl transfer). In terms of biological role, catalyzes the phospholipid dependent N-acylation of the N-terminal cysteine of apolipoprotein, the last step in lipoprotein maturation. In Bdellovibrio bacteriovorus (strain ATCC 15356 / DSM 50701 / NCIMB 9529 / HD100), this protein is Apolipoprotein N-acyltransferase.